The primary structure comprises 386 residues: GTPase Obg (386 aa).

In terms of domain architecture, Obg spans 4–162; the sequence is SNFVDYVKIY…MTVILELKLL (159 aa). Positions 18-45 are disordered; it reads KGGRGSTHMRREKYTPNGGPDGGDGGRG. The segment covering 36-45 has biased composition (gly residues); that stretch reads GPDGGDGGRG. An OBG-type G domain is found at 163–329; it reads ADVGLVGFPN…LKDILWTELN (167 aa). Residues 169–176, 194–198, 216–219, 283–286, and 310–312 each bind GTP; these read GFPNAGKS, FTTLE, DIPG, TKSD, and SSV. Positions 176 and 196 each coordinate Mg(2+). The segment at 351-386 is disordered; that stretch reads ELKDMGEDEELDYEYEDDGDEDDLDYEYEEEDWEDK. The span at 356–386 shows a compositional bias: acidic residues; the sequence is GEDEELDYEYEDDGDEDDLDYEYEEEDWEDK.

It belongs to the TRAFAC class OBG-HflX-like GTPase superfamily. OBG GTPase family. As to quaternary structure, monomer. It depends on Mg(2+) as a cofactor.

The protein localises to the cytoplasm. In terms of biological role, an essential GTPase which binds GTP, GDP and possibly (p)ppGpp with moderate affinity, with high nucleotide exchange rates and a fairly low GTP hydrolysis rate. Plays a role in control of the cell cycle, stress response, ribosome biogenesis and in those bacteria that undergo differentiation, in morphogenesis control. The protein is GTPase Obg of Bacteroides fragilis (strain YCH46).